The chain runs to 831 residues: Maltodextrin phosphorylase (831 aa).

K592 carries the post-translational modification N6-(pyridoxal phosphate)lysine.

This sequence belongs to the glycogen phosphorylase family. In terms of assembly, trimer (at 25 degrees Celsius). Pyridoxal 5'-phosphate is required as a cofactor.

The enzyme catalyses [(1-&gt;4)-alpha-D-glucosyl](n) + phosphate = [(1-&gt;4)-alpha-D-glucosyl](n-1) + alpha-D-glucose 1-phosphate. In terms of biological role, phosphorylase is an important allosteric enzyme in carbohydrate metabolism. Catalyzes the phospholytic cleavage of maltodextrins with a minimal chain length of five glucose residues to yield glucose-1-phosphate. Low activity with tetraose and no activity with triose and maltose. Long maltodextrins (8 to 15 glucose units), amylose and starch are not as good substrates as maltoheptaose. The polypeptide is Maltodextrin phosphorylase (malP) (Thermococcus litoralis (strain ATCC 51850 / DSM 5473 / JCM 8560 / NS-C)).